Here is a 179-residue protein sequence, read N- to C-terminus: Replication restart protein DnaT (179 aa).

Residues 151–179 (SRASNGGQPKRDVNSVSEPDSHIPRGFRG) form a disordered region. The segment covering 159 to 173 (PKRDVNSVSEPDSHI) has biased composition (basic and acidic residues).

The protein belongs to the DnaT family. In terms of assembly, homooligomerizes. Interacts with PriB. Component of the replication restart primosome. Primosome assembly occurs via a 'hand-off' mechanism. PriA binds to replication forks, subsequently PriB then DnaT bind; DnaT then displaces ssDNA to generate the helicase loading substrate.

Involved in the restart of stalled replication forks, which reloads the replicative helicase on sites other than the origin of replication. Can function in multiple replication restart pathways. Displaces ssDNA from a PriB-ssDNA complex. Probably forms a spiral filament on ssDNA. In Klebsiella pneumoniae (strain 342), this protein is Replication restart protein DnaT.